The primary structure comprises 151 residues: Large ribosomal subunit protein bL9 (151 aa).

Belongs to the bacterial ribosomal protein bL9 family.

In terms of biological role, binds to the 23S rRNA. The protein is Large ribosomal subunit protein bL9 of Nitrosococcus oceani (strain ATCC 19707 / BCRC 17464 / JCM 30415 / NCIMB 11848 / C-107).